Reading from the N-terminus, the 478-residue chain is Zinc finger protein 410 (478 aa).

Disordered regions lie at residues 84–113 (PDGE…LQDL) and 187–214 (NAKT…PLPQ). Polar residues predominate over residues 103–113 (TPESPSLLQDL). 5 consecutive C2H2-type zinc fingers follow at residues 219–243 (LKCT…LKTH), 249–273 (FICP…MRTH), 279–303 (FMCH…RRIH), 309–333 (FLCE…LVVH), and 339–362 (HQCQ…RKHH). The Zn(2+) site is built by Cys221, Cys226, His239, His243, Cys251, Cys256, His269, His273, Cys281, Cys286, His299, His303, Cys311, Cys316, His329, His333, Cys341, Cys344, His357, and His361.

As to quaternary structure, interacts with CDKN2A/p14ARF. Post-translationally, O-glycosylated. O-GlcNAcylation may occur in response to increasing glucose levels and affect transcription factor activity. In terms of processing, sumoylated. Sumoylation increases its half-life, possibly by blocking ubiquitin-mediated degradation.

Its subcellular location is the nucleus. It localises to the chromosome. In terms of biological role, transcription factor that binds to the sequence motif 5'-CATCCCATAATA-3', and is specifically required to silence expression of fetal hemoglobin in adult erythroid cells. Prevents expression of fetal hemoglobin genes HBG1 and HBG2 through CHD4: acts as a direct transcriptional activator of CHD4, a central component of the NuRD complex that represses transcription of fetal hemoglobin genes HBG1 and HBG2 in erythroid cells. May also activate transcription of matrix-remodeling genes such as MMP1 during fibroblast senescence. May activate transcription of the gap junction gene GJC1, perhaps in response to increasing glucose. However, recent studies suggest that ZNF410 is dedicated to regulate expression of a single gene: CHD4. The sequence is that of Zinc finger protein 410 from Mus musculus (Mouse).